The chain runs to 66 residues: Beta-toxin Cb3 (66 aa).

In terms of domain architecture, LCN-type CS-alpha/beta spans 1–66 (KEGYIVNYYD…VWPLPNKTCL (66 aa)). 4 cysteine pairs are disulfide-bonded: C12-C65, C16-C41, C25-C46, and C29-C48.

The protein belongs to the long (4 C-C) scorpion toxin superfamily. Sodium channel inhibitor family. Beta subfamily. Expressed by the venom gland.

Its subcellular location is the secreted. In terms of biological role, beta toxins bind voltage-independently at site-4 of sodium channels (Nav) and reduces peak current and shifts the voltage of activation toward more negative potentials thereby affecting sodium channel activation and promoting spontaneous and repetitive firing. Has an inhibitory effect on voltage-gated sodium channels hNav1.1/SCN1A, hNav1.2/SCN2A, hNav1.4/SCN4A and hNav1.6/SCN8A. Reduces the peak current of hNav1.5/SCN5A but does not shift its voltage of activation. Also affects the inactivation processes of hNav1.1/SCN1A, hNav1.4/SCN4A, hNav1.5/SCN5A and hNav1.6/SCN8A. This toxin is active against mammals and lethal to mice. In Centruroides baergi (Scorpion), this protein is Beta-toxin Cb3.